The sequence spans 440 residues: Transposon Ty1-BR Gag polyprotein (440 aa).

3 stretches are compositionally biased toward polar residues: residues 1-10 (MESQQLSNYP), 48-60 (TKANSQQTTTPAS), and 127-152 (QSQFPQYPSSVGTPLSTPSPESGNTF). Disordered stretches follow at residues 1–93 (MESQ…MMTQ), 126–173 (PQSQ…RPPP), and 352–440 (GSRN…PETY). Low complexity predominate over residues 153-165 (TDSSSADSDMTST). Residues 299 to 401 (NNGIHINNKV…NSKSKTARAH (103 aa)) form an RNA-binding region. Residues 402–418 (NVSTSNNSPSTDNDSIS) are compositionally biased toward low complexity. At S416 the chain carries Phosphoserine. Positions 419–428 (KSTTEPIQLN) are enriched in polar residues. Residues 429–440 (NKHDLHLRPETY) are compositionally biased toward basic and acidic residues.

Homotrimer.

The protein resides in the cytoplasm. Functionally, capsid protein (CA) is the structural component of the virus-like particle (VLP), forming the shell that encapsulates the retrotransposons dimeric RNA genome. The particles are assembled from trimer-clustered units and there are holes in the capsid shells that allow for the diffusion of macromolecules. CA also has nucleocapsid-like chaperone activity, promoting primer tRNA(i)-Met annealing to the multipartite primer-binding site (PBS), dimerization of Ty1 RNA and initiation of reverse transcription. This chain is Transposon Ty1-BR Gag polyprotein (TY1A-BR), found in Saccharomyces cerevisiae (strain ATCC 204508 / S288c) (Baker's yeast).